Consider the following 87-residue polypeptide: HssA/B-like protein 8 (87 aa).

Positions 1 to 22 (MSILSALTSISNPMKSTKSSVA) are enriched in polar residues. A disordered region spans residues 1–24 (MSILSALTSISNPMKSTKSSVANG).

It belongs to the hssA/B family.

In Dictyostelium discoideum (Social amoeba), this protein is HssA/B-like protein 8 (hssl8).